A 69-amino-acid chain; its full sequence is Toxin Tz2 (69 aa).

The first 7 residues, 1 to 7, serve as a signal peptide directing secretion; the sequence is IEVVMGG. In terms of domain architecture, LCN-type CS-alpha/beta spans 8–69; sequence KEGYLLDKSN…KMWDLKTNKC (62 aa). 4 cysteine pairs are disulfide-bonded: Cys-19–Cys-69, Cys-23–Cys-45, Cys-31–Cys-50, and Cys-35–Cys-52.

Belongs to the long (4 C-C) scorpion toxin superfamily. Sodium channel inhibitor family. Beta subfamily. As to expression, expressed by the venom gland.

It is found in the secreted. Functionally, beta toxins bind voltage-independently at site-4 of sodium channels (Nav) and shift the voltage of activation toward more negative potentials thereby affecting sodium channel activation and promoting spontaneous and repetitive firing. In Tityus zulianus (Venezuelan scorpion), this protein is Toxin Tz2.